The following is a 593-amino-acid chain: Probable metalloendopeptidase G1-type (593 aa).

Histidine 41 contributes to the Zn(2+) binding site. Glutamate 44 is an active-site residue. Zn(2+) is bound at residue histidine 45.

Belongs to the peptidase M44 family. The cofactor is Zn(2+).

In terms of biological role, seems to be involved in viral proteins maturation by cleavage at Ala-Gly-|-Xaa motifs. The protein is Probable metalloendopeptidase G1-type of Homo sapiens (Human).